Consider the following 400-residue polypeptide: Tryptophan synthase beta chain (400 aa).

Lys-92 carries the N6-(pyridoxal phosphate)lysine modification.

Belongs to the TrpB family. Tetramer of two alpha and two beta chains. It depends on pyridoxal 5'-phosphate as a cofactor.

The enzyme catalyses (1S,2R)-1-C-(indol-3-yl)glycerol 3-phosphate + L-serine = D-glyceraldehyde 3-phosphate + L-tryptophan + H2O. It participates in amino-acid biosynthesis; L-tryptophan biosynthesis; L-tryptophan from chorismate: step 5/5. The beta subunit is responsible for the synthesis of L-tryptophan from indole and L-serine. This chain is Tryptophan synthase beta chain, found in Chromobacterium violaceum (strain ATCC 12472 / DSM 30191 / JCM 1249 / CCUG 213 / NBRC 12614 / NCIMB 9131 / NCTC 9757 / MK).